A 103-amino-acid polypeptide reads, in one-letter code: Large ribosomal subunit protein P2 (103 aa).

Positions 64–103 are disordered; that stretch reads LAISSSQKSEPAQPADTAESTQATENKEEEDEDFDIFAAF. Residues 90 to 103 are compositionally biased toward acidic residues; sequence KEEEDEDFDIFAAF.

The protein belongs to the eukaryotic ribosomal protein P1/P2 family. As to quaternary structure, component of the large ribosomal subunit.

Its subcellular location is the cytoplasm. Its function is as follows. Plays an important role in the elongation step of protein synthesis. The sequence is that of Large ribosomal subunit protein P2 (RPP2A) from Encephalitozoon cuniculi (strain GB-M1) (Microsporidian parasite).